Reading from the N-terminus, the 249-residue chain is 3-deoxy-manno-octulosonate cytidylyltransferase (249 aa).

This sequence belongs to the KdsB family.

The protein resides in the cytoplasm. The catalysed reaction is 3-deoxy-alpha-D-manno-oct-2-ulosonate + CTP = CMP-3-deoxy-beta-D-manno-octulosonate + diphosphate. It functions in the pathway nucleotide-sugar biosynthesis; CMP-3-deoxy-D-manno-octulosonate biosynthesis; CMP-3-deoxy-D-manno-octulosonate from 3-deoxy-D-manno-octulosonate and CTP: step 1/1. It participates in bacterial outer membrane biogenesis; lipopolysaccharide biosynthesis. Activates KDO (a required 8-carbon sugar) for incorporation into bacterial lipopolysaccharide in Gram-negative bacteria. The protein is 3-deoxy-manno-octulosonate cytidylyltransferase of Aliivibrio salmonicida (strain LFI1238) (Vibrio salmonicida (strain LFI1238)).